Here is a 446-residue protein sequence, read N- to C-terminus: Citrate/sodium symporter (446 aa).

Topologically, residues 1 to 27 (MTNMSQPPATEKKGVSDLLGFKIFGMP) are cytoplasmic. Residues 28–44 (LPLYAFALITLLLSHFY) traverse the membrane as a helical segment. At 45 to 50 (NALPTD) the chain is on the periplasmic side. Residues 51–71 (IVGGFAIMFIIGAIFGEIGKR) form a helical membrane-spanning segment. Topologically, residues 72 to 80 (LPIFNKYIG) are cytoplasmic. The helical transmembrane segment at 81–95 (GAPVMIFLVAAYFVY) threads the bilayer. The Periplasmic segment spans residues 96-115 (AGIFTQKEIDAISNVMDKSN). Residues 116 to 130 (FLNLFIAVLITGAIL) form a helical membrane-spanning segment. At 131–136 (SVNRRL) the chain is on the cytoplasmic side. Residues 137–166 (LLKSLLGYIPTILMGIVGASIFGIAIGLVF) form a helical membrane-spanning segment. The Periplasmic segment spans residues 167–181 (GIPVDRIMMLYVLPI). Positions 181 and 183 each coordinate Na(+). An intramembrane region (helical) is located at residues 182–189 (MGGGNGAG). Residues N186 and G187 each contribute to the citrate site. Over 190 to 212 (AVPLSEIYHSVTGRSREEYYSTA) the chain is Periplasmic. Residues 213–233 (IAILTIANIFAIVFAAVLDII) traverse the membrane as a helical segment. The Cytoplasmic portion of the chain corresponds to 234-264 (GKKHTWLSGEGELVRKASFKVEEDEKTGQIT). Residues 265–287 (HRETAVGLVLSTTCFLLAYVVAK) traverse the membrane as a helical segment. Topologically, residues 288–299 (KILPSIGGVAIH) are periplasmic. The chain crosses the membrane as a helical span at residues 300–315 (YFAWMVLIVAALNASG). The Cytoplasmic segment spans residues 316–327 (LCSPEIKAGAKR). The helical transmembrane segment at 328 to 351 (LSDFFSKQLLWVLMVGVGVCYTDL) threads the bilayer. At 352–359 (QEIINAIT) the chain is on the periplasmic side. A helical membrane pass occupies residues 360–381 (FANVVIAAIIVIGAVLGAAIGG). The Cytoplasmic portion of the chain corresponds to 382–398 (WLMGFFPIESAITAGLC). 2 residues coordinate Na(+): M399 and N401. The helical intramembrane region spans 399-406 (MANRGGSG). Positions 402, 404, and 405 each coordinate citrate. The Cytoplasmic portion of the chain corresponds to 407–416 (DLEVLSACNR). The helical transmembrane segment at 417 to 438 (MNLISYAQISSRLGGGIVLVIA) threads the bilayer. R428 serves as a coordination point for citrate. Residues 439 to 446 (SIVFGMMI) are Periplasmic-facing.

This sequence belongs to the 2-hydroxycarboxylate transporter (2-HCT) (TC 2.A.24) family. In terms of assembly, homodimer.

The protein localises to the cell inner membrane. The catalysed reaction is citrate(out) + 2 Na(+)(out) = citrate(in) + 2 Na(+)(in). Its activity is regulated as follows. In the absence of Na(+), transport is inhibited by the thiol reagents N-ethylmaleimide (NEM) and the methanethiosulfonate (MTS) derivatives MTSEA, MTSET and MTSES. However, inactivation by NEM, MTSES and MTSET is prevented by the presence of Na(+). In the absence of Na(+), the substrate citrate has no effect on the inactivation by permeable or impermeable thiol reagents. In contrast, when subsaturating concentrations of Na(+) are present, citrate significantly reduces inactivation, suggesting ordered binding of the substrate and co-ion; citrate is bound after Na(+). The membrane impermeable bulky maleimide AmdiS does not inactivate the transporter in right-side-out membrane vesicles. The apparent affinity for Na(+) decreases with increasing proton concentration. Protons cannot replace Na(+) in the translocation step but the decrease in apparent affinity for Na(+) towards lower pH suggests that protons can compete with Na(+) for the cation-binding sites. Secondary active transporter that catalyzes the uptake of citrate across the membrane with the concomitant uptake of sodium. There are conflicting data regarding exact substrate stoichiometry: the sodium/citrate stoichiometry was predicted to be 1, but the latest studies suggest that CitS transports citrate in symport with 2 sodium ions. Transports citrate as a divalent citrate anion, H-citrate(2-). Shows narrow substrate specificity and is very specific, transporting only citrate and to a low extent citromalate. Symport of Na(+) is absolutely required in the range pH 5-7 because no uptake can be detected in the absence of Na(+). Lithium can replace Na(+) in the symport reaction but it takes about a 200-fold higher concentration of Li(+) over Na(+) to achieve the same rate of uptake. The chain is Citrate/sodium symporter from Klebsiella pneumoniae.